Consider the following 288-residue polypeptide: NAD(P)H-hydrate epimerase (288 aa).

Residues 1 to 47 constitute a mitochondrion transit peptide; sequence MSRLRALLGLGLLVAGSRVPRIKSQTIACRSGPTWWGPQRLNSGGRW. A Phosphoserine modification is found at Ser-49. The YjeF N-terminal domain occupies 65 to 275; sequence AQAVDQELFN…ALEKKYQLNL (211 aa). 119–123 is a binding site for (6S)-NADPHX; it reads NNGGD. Residue Asn-120 participates in K(+) binding. An N6-succinyllysine modification is found at Lys-144. Asp-185 is a K(+) binding site. (6S)-NADPHX contacts are provided by residues 189–195 and Asp-218; that span reads GFSFKGD. A K(+)-binding site is contributed by Ser-221.

It belongs to the NnrE/AIBP family. As to quaternary structure, homodimer. Interacts with APOA1 and APOA2. The cofactor is K(+). Undergoes physiological phosphorylation during sperm capacitation, downstream to PKA activation. In terms of tissue distribution, ubiquitously expressed, with highest levels in kidney, heart and liver. Present in cerebrospinal fluid and urine but not in serum from healthy patients. Present in serum of sepsis patients (at protein level).

The protein resides in the mitochondrion. Its subcellular location is the secreted. It catalyses the reaction (6R)-NADHX = (6S)-NADHX. It carries out the reaction (6R)-NADPHX = (6S)-NADPHX. Its function is as follows. Catalyzes the epimerization of the S- and R-forms of NAD(P)HX, a damaged form of NAD(P)H that is a result of enzymatic or heat-dependent hydration. This is a prerequisite for the S-specific NAD(P)H-hydrate dehydratase to allow the repair of both epimers of NAD(P)HX. Accelerates cholesterol efflux from endothelial cells to high-density lipoprotein (HDL) and thereby regulates angiogenesis. This Homo sapiens (Human) protein is NAD(P)H-hydrate epimerase.